Consider the following 123-residue polypeptide: Small ribosomal subunit protein bS16 (123 aa).

The disordered stretch occupies residues 86–123; sequence PVRAEQTKQPQPKAKAQQRAKDQAERDAAAAAEAAAGE. Residues 93–102 are compositionally biased toward low complexity; that stretch reads KQPQPKAKAQ. Basic and acidic residues predominate over residues 104-113; sequence RAKDQAERDA. Positions 114 to 123 are enriched in low complexity; that stretch reads AAAAEAAAGE.

The protein belongs to the bacterial ribosomal protein bS16 family.

This is Small ribosomal subunit protein bS16 from Paramagnetospirillum magneticum (strain ATCC 700264 / AMB-1) (Magnetospirillum magneticum).